The primary structure comprises 372 residues: DNA replication and repair protein RecF (372 aa).

Position 30-37 (30-37) interacts with ATP; it reads GENAQGKT.

The protein belongs to the RecF family.

It localises to the cytoplasm. In terms of biological role, the RecF protein is involved in DNA metabolism; it is required for DNA replication and normal SOS inducibility. RecF binds preferentially to single-stranded, linear DNA. It also seems to bind ATP. The protein is DNA replication and repair protein RecF of Shouchella clausii (strain KSM-K16) (Alkalihalobacillus clausii).